Here is a 331-residue protein sequence, read N- to C-terminus: MILSIESSCDDSSIAITRLEDRAILFHKKISQDSAHSPHGGVVPELASRLHAVALPKILEECAPFFPRLKAIAVTNEPGLSVTLLEGVMMAKALALALHLPLIAVNHLKGHLYSLFLEQESRFPLDVLLVSGGHTMVLHARSFGEIEIIGQSMDDSFGESFDKVAKMLSLGYPGGPIVESYAKEGDASRFPLPLPLAGKKEVAFSFSGLKNAVRLVIQSLQNPPNEQEKRDICASFQATAIAHLIQKCRLYLATSNAPYLAIVGGASANLALREEMERLGEHFGKKLLLAPLAYCSDNAAMIGRAALESYALGAFTSPLELTVRPRTPSLC.

Fe cation is bound by residues H107 and H111. Substrate contacts are provided by residues 129-133 (LVSGG), D162, G175, and N269. D297 serves as a coordination point for Fe cation.

This sequence belongs to the KAE1 / TsaD family. Fe(2+) serves as cofactor.

The protein localises to the cytoplasm. It carries out the reaction L-threonylcarbamoyladenylate + adenosine(37) in tRNA = N(6)-L-threonylcarbamoyladenosine(37) in tRNA + AMP + H(+). Its function is as follows. Required for the formation of a threonylcarbamoyl group on adenosine at position 37 (t(6)A37) in tRNAs that read codons beginning with adenine. Is involved in the transfer of the threonylcarbamoyl moiety of threonylcarbamoyl-AMP (TC-AMP) to the N6 group of A37, together with TsaE and TsaB. TsaD likely plays a direct catalytic role in this reaction. In Wolinella succinogenes (strain ATCC 29543 / DSM 1740 / CCUG 13145 / JCM 31913 / LMG 7466 / NCTC 11488 / FDC 602W) (Vibrio succinogenes), this protein is tRNA N6-adenosine threonylcarbamoyltransferase.